The following is a 454-amino-acid chain: CBL-interacting protein kinase 17 (454 aa).

One can recognise a Protein kinase domain in the interval 13–268 (YEMGRTLGEG…MAGIKSHEWF (256 aa)). ATP-binding positions include 19 to 27 (LGEGNFGKV) and Lys42. Catalysis depends on Asp136, which acts as the Proton acceptor. The activation loop stretch occupies residues 154–183 (DFGLSALPQHLGNDGLLHTTCGSPNYIAPE). One can recognise an NAF domain in the interval 304-328 (KNSHQINAFQLIGMASSLDLSGFFE). The tract at residues 334 to 363 (QRRIRFTSTHPPKDAFDKIESSATELGFQV) is PPI.

This sequence belongs to the protein kinase superfamily. CAMK Ser/Thr protein kinase family. SNF1 subfamily. It depends on Mn(2+) as a cofactor.

The catalysed reaction is L-seryl-[protein] + ATP = O-phospho-L-seryl-[protein] + ADP + H(+). The enzyme catalyses L-threonyl-[protein] + ATP = O-phospho-L-threonyl-[protein] + ADP + H(+). In terms of biological role, CIPK serine-threonine protein kinases interact with CBL proteins. Binding of a CBL protein to the regulatory NAF domain of CIPK protein lead to the activation of the kinase in a calcium-dependent manner. The sequence is that of CBL-interacting protein kinase 17 (CIPK17) from Oryza sativa subsp. japonica (Rice).